A 125-amino-acid polypeptide reads, in one-letter code: Small ribosomal subunit protein uS13 (125 aa).

Residues 92-125 (RRSLPVRGQRTQTNARTRKGKRKTVAGKKKATKK) are disordered. Over residues 107-125 (RTRKGKRKTVAGKKKATKK) the composition is skewed to basic residues.

Belongs to the universal ribosomal protein uS13 family. In terms of assembly, part of the 30S ribosomal subunit. Forms a loose heterodimer with protein S19. Forms two bridges to the 50S subunit in the 70S ribosome.

Its function is as follows. Located at the top of the head of the 30S subunit, it contacts several helices of the 16S rRNA. In the 70S ribosome it contacts the 23S rRNA (bridge B1a) and protein L5 of the 50S subunit (bridge B1b), connecting the 2 subunits; these bridges are implicated in subunit movement. Contacts the tRNAs in the A and P-sites. The protein is Small ribosomal subunit protein uS13 of Chlorobium phaeobacteroides (strain DSM 266 / SMG 266 / 2430).